The sequence spans 602 residues: Carbon catabolite repressor protein 4 homolog 1 (602 aa).

Residues 113–136 (ASAATEGNDEEELPRLNSSGSGSG) are disordered. E299 is a Mg(2+) binding site.

The protein belongs to the CCR4/nocturin family. As to quaternary structure, component of the CCR4-NOT complex, at least composed of CRR4 and CAF1 proteins. Mg(2+) is required as a cofactor.

It localises to the nucleus. Its subcellular location is the cytoplasm. The catalysed reaction is Exonucleolytic cleavage of poly(A) to 5'-AMP.. Acts as a catalytic component of the CCR4-NOT core complex, which in the nucleus seems to be a general transcription factor, and in the cytoplasm the major mRNA deadenylase involved in mRNA turnover. This is Carbon catabolite repressor protein 4 homolog 1 (CCR4-1) from Arabidopsis thaliana (Mouse-ear cress).